A 424-amino-acid chain; its full sequence is G1/S-specific cyclin-E (424 aa).

The tract at residues 1–25 (MSRRSGRLQSRQDNQPLTECISDEN) is disordered. The segment covering 7–17 (RLQSRQDNQPL) has biased composition (polar residues). Thr411 bears the Phosphothreonine mark.

This sequence belongs to the cyclin family. Cyclin E subfamily. Interacts with a member of the CDK2/CDK protein kinases to form a serine/threonine kinase holoenzyme complex. The cyclin subunit imparts substrate specificity to the complex.

It localises to the nucleus. Its function is as follows. Essential for the control of the cell cycle at the G1/S (start) transition. This is G1/S-specific cyclin-E (CYCE) from Hemicentrotus pulcherrimus (Sea urchin).